A 955-amino-acid polypeptide reads, in one-letter code: Protein translocase subunit SecA (955 aa).

ATP is bound by residues Gln-87, 105 to 109, and Asp-494; that span reads GEGKT. The disordered stretch occupies residues 861 to 955; sequence AAPAPAAPRP…KKAPRTKRKR (95 aa). Positions 874-888 are enriched in low complexity; that stretch reads QEAAQQAQGTAAPSA. Over residues 943–955 the composition is skewed to basic residues; the sequence is SKGKKAPRTKRKR.

The protein belongs to the SecA family. In terms of assembly, monomer and homodimer. Part of the essential Sec protein translocation apparatus which comprises SecA, SecYEG and auxiliary proteins SecDF. Other proteins may also be involved.

It localises to the cell membrane. Its subcellular location is the cytoplasm. It catalyses the reaction ATP + H2O + cellular proteinSide 1 = ADP + phosphate + cellular proteinSide 2.. Functionally, part of the Sec protein translocase complex. Interacts with the SecYEG preprotein conducting channel. Has a central role in coupling the hydrolysis of ATP to the transfer of proteins into and across the cell membrane, serving as an ATP-driven molecular motor driving the stepwise translocation of polypeptide chains across the membrane. This is Protein translocase subunit SecA from Rhodococcus opacus (strain B4).